A 486-amino-acid chain; its full sequence is E3 ubiquitin-protein ligase TRIM58 (486 aa).

Residues 16–61 form an RING-type zinc finger; sequence CPVCLDFLQEPVSVDCGHSFCLRCISEFCEKSDGAQGGVYACPQCR. The segment at 91-132 adopts a B box-type zinc-finger fold; sequence PGARRCARHGEDLSRFCEEDEAALCWVCDAGPEHRTHRTAPL. Residues Cys-96, His-99, Cys-118, and His-124 each contribute to the Zn(2+) site. A coiled-coil region spans residues 193 to 242; the sequence is LAQEEQRQLRRLEAEERATLQRLRESKSRLVQQSKALKELADELQERCQR. One can recognise a B30.2/SPRY domain in the interval 273 to 463; it reads LKTACCIPGR…TPLILPPTTI (191 aa).

It belongs to the TRIM/RBCC family. In terms of tissue distribution, expressed in erythroblasts.

The enzyme catalyses S-ubiquitinyl-[E2 ubiquitin-conjugating enzyme]-L-cysteine + [acceptor protein]-L-lysine = [E2 ubiquitin-conjugating enzyme]-L-cysteine + N(6)-ubiquitinyl-[acceptor protein]-L-lysine.. It participates in protein modification; protein ubiquitination. E3 ubiquitin ligase induced during late erythropoiesis. Directly binds and ubiquitinates the intermediate chain of the microtubule motor dynein (DYNC1LI1/DYNC1LI2), stimulating the degradation of the dynein holoprotein complex. May participate in the erythroblast enucleation process through regulation of nuclear polarization. This is E3 ubiquitin-protein ligase TRIM58 (TRIM58) from Homo sapiens (Human).